Consider the following 880-residue polypeptide: Alanine--tRNA ligase (880 aa).

Residues histidine 569, histidine 573, cysteine 671, and histidine 675 each contribute to the Zn(2+) site.

This sequence belongs to the class-II aminoacyl-tRNA synthetase family. As to quaternary structure, homotetramer. Requires Zn(2+) as cofactor.

It localises to the cytoplasm. It carries out the reaction tRNA(Ala) + L-alanine + ATP = L-alanyl-tRNA(Ala) + AMP + diphosphate. In terms of biological role, catalyzes the attachment of alanine to tRNA(Ala) in a two-step reaction: alanine is first activated by ATP to form Ala-AMP and then transferred to the acceptor end of tRNA(Ala). Also edits incorrectly charged Ser-tRNA(Ala) and Gly-tRNA(Ala) via its editing domain. This chain is Alanine--tRNA ligase, found in Buchnera aphidicola subsp. Baizongia pistaciae (strain Bp).